The following is a 131-amino-acid chain: UPF0102 protein AZC_4471 (131 aa).

This sequence belongs to the UPF0102 family.

This chain is UPF0102 protein AZC_4471, found in Azorhizobium caulinodans (strain ATCC 43989 / DSM 5975 / JCM 20966 / LMG 6465 / NBRC 14845 / NCIMB 13405 / ORS 571).